The chain runs to 179 residues: Chymotrypsin inhibitor ECI (179 aa).

Residue Gln-1 is modified to Pyrrolidone carboxylic acid. 2 cysteine pairs are disulfide-bonded: Cys-40–Cys-84 and Cys-134–Cys-143.

Belongs to the protease inhibitor I3 (leguminous Kunitz-type inhibitor) family.

Inhibition of chymotrypsin. The protein is Chymotrypsin inhibitor ECI of Erythrina variegata (Indian coral tree).